A 205-amino-acid polypeptide reads, in one-letter code: Beta-crystallin B2 (205 aa).

A2 is modified (N-acetylalanine). The segment at 2-16 is N-terminal arm; the sequence is ASDHQTQAGKPQPLN. 2 Beta/gamma crystallin 'Greek key' domains span residues 17–56 and 57–101; these read PKII…LVQA and GPWV…RPIK. The interval 102–106 is connecting peptide; it reads VDSQE. 2 consecutive Beta/gamma crystallin 'Greek key' domains span residues 107–148 and 149–191; these read HKII…RVQS and GTWV…RRIR. The interval 193–205 is C-terminal arm; the sequence is MQWHQRGAFHPTN.

The protein belongs to the beta/gamma-crystallin family. In terms of assembly, homo/heterodimer, or complexes of higher-order. The structure of beta-crystallin oligomers seems to be stabilized through interactions between the N-terminal arms.

Functionally, crystallins are the dominant structural components of the vertebrate eye lens. This is Beta-crystallin B2 (CRYBB2) from Oryctolagus cuniculus (Rabbit).